The following is a 197-amino-acid chain: Imidazoleglycerol-phosphate dehydratase (197 aa).

The protein belongs to the imidazoleglycerol-phosphate dehydratase family.

It localises to the cytoplasm. It carries out the reaction D-erythro-1-(imidazol-4-yl)glycerol 3-phosphate = 3-(imidazol-4-yl)-2-oxopropyl phosphate + H2O. It functions in the pathway amino-acid biosynthesis; L-histidine biosynthesis; L-histidine from 5-phospho-alpha-D-ribose 1-diphosphate: step 6/9. The sequence is that of Imidazoleglycerol-phosphate dehydratase from Laribacter hongkongensis (strain HLHK9).